The chain runs to 159 residues: Small ribosomal subunit protein uS7c (159 aa).

Belongs to the universal ribosomal protein uS7 family. In terms of assembly, part of the 30S ribosomal subunit.

The protein localises to the plastid. The protein resides in the chloroplast. One of the primary rRNA binding proteins, it binds directly to 16S rRNA where it nucleates assembly of the head domain of the 30S subunit. This is Small ribosomal subunit protein uS7c (rps7) from Bigelowiella natans (Pedinomonas minutissima).